Reading from the N-terminus, the 215-residue chain is CASP-like protein 1E1 (215 aa).

Residues 1-51 (MESSRGKPGLNGSGGGAAAFDYSSRRGYYTGAGAALPPLAAGSRAPPVDPC) are Cytoplasmic-facing. The helical transmembrane segment at 52-72 (CVVLRVFVLLGTLASAVVMAA) threads the bilayer. Residues 73 to 103 (DRQSTTVQIAAGEELAPPLRVPVTAKWTYSS) lie on the Extracellular side of the membrane. A helical transmembrane segment spans residues 104 to 124 (AFVYFVVANAMVFAFSAAALA). The Cytoplasmic portion of the chain corresponds to 125-130 (AVRRRS). A helical membrane pass occupies residues 131–151 (AVVPVMVGDLVAMALLFSAVG). Over 152–185 (AAAQFGLLGERGNAHVRWAKVCDVYGPFCERAMA) the chain is Extracellular. A helical membrane pass occupies residues 186-206 (AVVVALIAAFADLVLLMLTIL). Over 207 to 215 (TIHKASSYY) the chain is Cytoplasmic.

It belongs to the Casparian strip membrane proteins (CASP) family. Homodimer and heterodimers.

The protein localises to the cell membrane. The sequence is that of CASP-like protein 1E1 from Oryza sativa subsp. japonica (Rice).